We begin with the raw amino-acid sequence, 366 residues long: MVREKVRVSTRTLQWKCVESRVDSKRLYYGRFILSPLMKGQADTIGIAMRRALLGEIEGTCITRAKFEKIPHEYSTIVGIQESVHEILMNLKEIVLRSNLYGTCNASICVKGPGCVTAQDILLPPSVEIIDNTQHIASLMEPIHLCIGLQIERNRGYHIKSPNNFQDGSYPIDAVFMPVRNANHSIHSYGNQNEKQEILFLEIWTNGSLTPKEALHEASRNLIDLFLPFLHAEEENLHLGKNKYNVTFPLFTFHKKLAKLRKPKNEIALKSIFIDQLELPPRIYNSLKGSKIHTLSDLLNKSQEDLMKMKHFRIEDVKQILDILEIEKAFHNRFNEENVENAFISSFFLNKTKGQKKDEMGFESLE.

The alpha N-terminal domain (alpha-NTD) stretch occupies residues 1-233 (MVREKVRVST…DLFLPFLHAE (233 aa)). The interval 264–366 (KNEIALKSIF…KDEMGFESLE (103 aa)) is alpha C-terminal domain (alpha-CTD).

The protein belongs to the RNA polymerase alpha chain family. In terms of assembly, in plastids the minimal PEP RNA polymerase catalytic core is composed of four subunits: alpha, beta, beta', and beta''. When a (nuclear-encoded) sigma factor is associated with the core the holoenzyme is formed, which can initiate transcription.

The protein resides in the plastid. The protein localises to the chloroplast. It catalyses the reaction RNA(n) + a ribonucleoside 5'-triphosphate = RNA(n+1) + diphosphate. DNA-dependent RNA polymerase catalyzes the transcription of DNA into RNA using the four ribonucleoside triphosphates as substrates. The sequence is that of DNA-directed RNA polymerase subunit alpha from Oenothera elata subsp. hookeri (Hooker's evening primrose).